Reading from the N-terminus, the 124-residue chain is Protein MGF 110-4L (124 aa).

The first 18 residues, 1–18 (MLVIFLGILGLLANQVLG), serve as a signal peptide directing secretion. A glycan (N-linked (GlcNAc...) asparagine; by host) is linked at Asn-64. A Prevents secretion from ER motif is present at residues 121-124 (KEDL).

Belongs to the asfivirus MGF 110 family.

The protein resides in the virion. The protein localises to the host endoplasmic reticulum-Golgi intermediate compartment. In terms of biological role, causes the redistribution of lumenal ER protein to an enlarged ERGIC compartment. In Ornithodoros (relapsing fever ticks), this protein is Protein MGF 110-4L.